A 108-amino-acid polypeptide reads, in one-letter code: Phosphoribosyl-ATP pyrophosphatase (108 aa).

The protein belongs to the PRA-PH family.

It is found in the cytoplasm. It catalyses the reaction 1-(5-phospho-beta-D-ribosyl)-ATP + H2O = 1-(5-phospho-beta-D-ribosyl)-5'-AMP + diphosphate + H(+). Its pathway is amino-acid biosynthesis; L-histidine biosynthesis; L-histidine from 5-phospho-alpha-D-ribose 1-diphosphate: step 2/9. The chain is Phosphoribosyl-ATP pyrophosphatase from Geobacter sulfurreducens (strain ATCC 51573 / DSM 12127 / PCA).